A 500-amino-acid polypeptide reads, in one-letter code: Probable cytosol aminopeptidase (500 aa).

Residues Lys-265 and Asp-270 each coordinate Mn(2+). Lys-277 is a catalytic residue. Mn(2+) is bound by residues Asp-288, Asp-347, and Glu-349. Arg-351 is an active-site residue.

The protein belongs to the peptidase M17 family. Requires Mn(2+) as cofactor.

It is found in the cytoplasm. It catalyses the reaction Release of an N-terminal amino acid, Xaa-|-Yaa-, in which Xaa is preferably Leu, but may be other amino acids including Pro although not Arg or Lys, and Yaa may be Pro. Amino acid amides and methyl esters are also readily hydrolyzed, but rates on arylamides are exceedingly low.. The enzyme catalyses Release of an N-terminal amino acid, preferentially leucine, but not glutamic or aspartic acids.. Its function is as follows. Presumably involved in the processing and regular turnover of intracellular proteins. Catalyzes the removal of unsubstituted N-terminal amino acids from various peptides. This is Probable cytosol aminopeptidase from Rickettsia felis (strain ATCC VR-1525 / URRWXCal2) (Rickettsia azadi).